The primary structure comprises 132 residues: Fatty acid-binding protein 1 (132 aa).

A fatty acid contacts are provided by residues arginine 106 and 128-130 (RYY).

It belongs to the calycin superfamily. Fatty-acid binding protein (FABP) family. As to quaternary structure, monomer. Midgut.

Its subcellular location is the cytoplasm. Its function is as follows. Binds fatty acids in a 1:1 molar ratio. The chain is Fatty acid-binding protein 1 (MFB1) from Manduca sexta (Tobacco hawkmoth).